The following is a 357-amino-acid chain: MSITIQNLNKHFGNFHALKNINLNVPTGKLVSLLGPSGCGKTTLLRIIAGLENADGGKILFDGQDVTAKHVRERKVGFVFQHYALFRHMNVFDNVAFGLTVLPKSERPSKGQIRAKVEELLKLVQLSHLAKSYPHQLSGGQRQRIALARALAVEPKLLLLDEPFGALDAKVRKELRTWLRDIHHNLGVTSILVTHDQEEALEVSDEIVVMNHGKIEQTGSAEAIYRKPENAFVTEFLGETDAFEGRIEKGFWHYNGFAWKLDAQYKWQEQTATGYIRPHEWQIAAEHETPMICAEIEKVHAVGALTHILVKHGKQDVHITLAGSDAARYPIAEGKELNLIPKQVYVFSQNELIEYSI.

Residues 3-237 (ITIQNLNKHF…PENAFVTEFL (235 aa)) enclose the ABC transporter domain. 35-42 (GPSGCGKT) is a binding site for ATP.

It belongs to the ABC transporter superfamily. Sulfate/tungstate importer (TC 3.A.1.6) family. As to quaternary structure, the complex is composed of two ATP-binding proteins (CysA), two transmembrane proteins (CysT and CysW) and a solute-binding protein (CysP).

Its subcellular location is the cell inner membrane. The enzyme catalyses sulfate(out) + ATP + H2O = sulfate(in) + ADP + phosphate + H(+). It carries out the reaction thiosulfate(out) + ATP + H2O = thiosulfate(in) + ADP + phosphate + H(+). Its function is as follows. Part of the ABC transporter complex CysAWTP involved in sulfate/thiosulfate import. Responsible for energy coupling to the transport system. The polypeptide is Sulfate/thiosulfate import ATP-binding protein CysA (Neisseria meningitidis serogroup A / serotype 4A (strain DSM 15465 / Z2491)).